A 377-amino-acid chain; its full sequence is Histidinol-phosphate aminotransferase (377 aa).

Position 232 is an N6-(pyridoxal phosphate)lysine (K232).

It belongs to the class-II pyridoxal-phosphate-dependent aminotransferase family. Histidinol-phosphate aminotransferase subfamily. Homodimer. Pyridoxal 5'-phosphate serves as cofactor.

It carries out the reaction L-histidinol phosphate + 2-oxoglutarate = 3-(imidazol-4-yl)-2-oxopropyl phosphate + L-glutamate. Its pathway is amino-acid biosynthesis; L-histidine biosynthesis; L-histidine from 5-phospho-alpha-D-ribose 1-diphosphate: step 7/9. In Mycobacterium sp. (strain JLS), this protein is Histidinol-phosphate aminotransferase.